We begin with the raw amino-acid sequence, 614 residues long: Jacalin-related lectin 14 (614 aa).

4 Jacalin-type lectin domains span residues 27 to 169, 172 to 314, 317 to 462, and 468 to 611; these read VQKM…YFSW, PRKM…YFTT, PTKS…YFSP, and AEKL…HVVP.

This sequence belongs to the jacalin lectin family.

This is Jacalin-related lectin 14 (JAL14) from Arabidopsis thaliana (Mouse-ear cress).